Consider the following 97-residue polypeptide: Large ribosomal subunit protein bL25 (97 aa).

It belongs to the bacterial ribosomal protein bL25 family. Part of the 50S ribosomal subunit; part of the 5S rRNA/L5/L18/L25 subcomplex. Contacts the 5S rRNA. Binds to the 5S rRNA independently of L5 and L18.

Its function is as follows. This is one of the proteins that binds to the 5S RNA in the ribosome where it forms part of the central protuberance. The protein is Large ribosomal subunit protein bL25 of Buchnera aphidicola subsp. Baizongia pistaciae (strain Bp).